An 86-amino-acid chain; its full sequence is Conotoxin Lt15a (86 aa).

A signal peptide spans 1-23 (MEKLTILILVATVLLAIQVLVQS). The propeptide occupies 24-49 (DGENPVKGRVKHYAAKRFSALFRGPR).

The protein belongs to the conotoxin O2 superfamily. Contains 4 disulfide bonds. As to expression, expressed by the venom duct.

The protein localises to the secreted. This Conus litteratus (Lettered cone) protein is Conotoxin Lt15a.